Here is a 189-residue protein sequence, read N- to C-terminus: 5-hmdU DNA kinase (189 aa).

It belongs to the thymidylate kinase family. 5-hmdU DNA kinase subfamily.

It catalyses the reaction 5-hydroxymethyl-dUMP in DNA + ATP = 5-phosphomethyl-dUMP in DNA + ADP + H(+). In terms of biological role, phosphorylates 5-hydroxymethyluracil (5hmdU) into 5-phosphomethyl-2'-deoxyuridine (5- PmdU) on DNA as a step in the pathway leading to thymidine hypermodifications in the viral genome. The phosphate is added internally to the DNA polymer. As a final result of the pathway of hypermodification, 5-AcNmdU substitutes for a subset of thymidines in the viral DNA. These modifications probably prevent degradation of viral genome by the host restriction-modification antiviral defense system. The polypeptide is 5-hmdU DNA kinase (Pseudomonas phage PaMx11).